Consider the following 323-residue polypeptide: HPr kinase/phosphorylase (323 aa).

Residues H146 and K167 contribute to the active site. ATP is bound at residue 161 to 168 (GESGLGKS). Mg(2+) is bound at residue S168. Catalysis depends on D185, which acts as the Proton acceptor; for phosphorylation activity. Proton donor; for dephosphorylation activity. Residues 209–218 (LEVRGLGLLD) form an important for the catalytic mechanism of both phosphorylation and dephosphorylation region. Residue E210 coordinates Mg(2+). R250 is an active-site residue. Residues 271–276 (QVAAGR) form an important for the catalytic mechanism of dephosphorylation region.

Belongs to the HPrK/P family. As to quaternary structure, homohexamer. It depends on Mg(2+) as a cofactor.

It catalyses the reaction [HPr protein]-L-serine + ATP = [HPr protein]-O-phospho-L-serine + ADP + H(+). The catalysed reaction is [HPr protein]-O-phospho-L-serine + phosphate + H(+) = [HPr protein]-L-serine + diphosphate. Its function is as follows. Catalyzes the ATP- as well as the pyrophosphate-dependent phosphorylation of a specific serine residue in HPr, a phosphocarrier protein of the phosphoenolpyruvate-dependent sugar phosphotransferase system (PTS). HprK/P also catalyzes the pyrophosphate-producing, inorganic phosphate-dependent dephosphorylation (phosphorolysis) of seryl-phosphorylated HPr (P-Ser-HPr). In Cupriavidus pinatubonensis (strain JMP 134 / LMG 1197) (Cupriavidus necator (strain JMP 134)), this protein is HPr kinase/phosphorylase.